A 168-amino-acid chain; its full sequence is MNINDKIGIYPGTFDPITFGHLDIIKRACKLVDKLIIGVAENVNKHTAFDTKLRTSMAENEIKGLGIDADVISFNGLLVKFAKEQNASVIIRGLRAVSDFDYEFQMSWVNYKLLPEIETIFLPASEDTQFISSSFVKEIARLGEDVSKFVSKGVQNELINLNRIKNGE.

Thr-13 is a substrate binding site. Residues 13 to 14 (TF) and His-21 contribute to the ATP site. Lys-45, Leu-78, and Arg-92 together coordinate substrate. Residues 93–95 (GLR), Glu-103, and 128–134 (TQFISSS) each bind ATP.

It belongs to the bacterial CoaD family. As to quaternary structure, homohexamer. Mg(2+) is required as a cofactor.

The protein resides in the cytoplasm. It carries out the reaction (R)-4'-phosphopantetheine + ATP + H(+) = 3'-dephospho-CoA + diphosphate. It functions in the pathway cofactor biosynthesis; coenzyme A biosynthesis; CoA from (R)-pantothenate: step 4/5. Reversibly transfers an adenylyl group from ATP to 4'-phosphopantetheine, yielding dephospho-CoA (dPCoA) and pyrophosphate. This Wolbachia pipientis wMel protein is Phosphopantetheine adenylyltransferase.